The sequence spans 533 residues: UDP-glucuronosyltransferase 1-2 (533 aa).

The N-terminal stretch at 1 to 27 (MDTGLCAPLRGLSGLLLLLCALPWAEG) is a signal peptide. N-linked (GlcNAc...) asparagine glycans are attached at residues Asn-133, Asn-141, Asn-295, and Asn-433. The chain crosses the membrane as a helical span at residues 491-507 (VIGFLLAIVLTVVFIVY).

Belongs to the UDP-glycosyltransferase family.

The protein localises to the microsome. The protein resides in the endoplasmic reticulum membrane. It catalyses the reaction glucuronate acceptor + UDP-alpha-D-glucuronate = acceptor beta-D-glucuronoside + UDP + H(+). In terms of biological role, UDPGT is of major importance in the conjugation and subsequent elimination of potentially toxic xenobiotics and endogenous compounds. The protein is UDP-glucuronosyltransferase 1-2 (Ugt1a2) of Rattus norvegicus (Rat).